We begin with the raw amino-acid sequence, 225 residues long: Histone H3-like centromeric protein cid (225 aa).

Positions 1–11 (MPRHSRAKRAP) are enriched in basic residues. The disordered stretch occupies residues 1–131 (MPRHSRAKRA…KAANPMSRAK (131 aa)). Positions 43–52 (FTTSQLTLQD) are enriched in polar residues. A phosphoserine mark is found at Ser74 and Ser75. Position 76 is a phosphothreonine (Thr76). Ser77 is subject to Phosphoserine. The segment covering 86-103 (RYPTTRSPQTRRMTVQQE) has biased composition (polar residues). The interval 133–225 (MDREIRRLQH…AYICDRGRQF (93 aa)) is H3-like.

The protein belongs to the histone H3 family. In terms of assembly, forms a nucleosome-like histone octamer containing two molecules each of H2A, H2B, cid and H4 assembled in one cid-H4 heterotetramer and two H2A-H2B heterodimers. The cid-H4 heterotetramer is more compact and structurally more rigid than corresponding H3-H4 heterotetramers. Interacts with the condensin subunit Cap-G. Interacts with Chrac-14.

It localises to the nucleus. Its subcellular location is the chromosome. The protein resides in the centromere. It is found in the kinetochore. Its function is as follows. Histone H3-like variant which exclusively replaces conventional H3 in the nucleosome core of centromeric chromatin at the inner plate of the kinetochore. Required for recruitment and assembly of kinetochore proteins, mitotic progression and chromosome segregation. May serve as an epigenetic mark that propagates centromere identity through replication and cell division. The polypeptide is Histone H3-like centromeric protein cid (Drosophila melanogaster (Fruit fly)).